We begin with the raw amino-acid sequence, 932 residues long: Protocadherin gamma-A2 (932 aa).

An N-terminal signal peptide occupies residues 1-28 (MAALQKLPHCRKLVLLCFLLATLWEARA). Cadherin domains are found at residues 29–133 (GQIR…APRF), 134–242 (GVEE…APVF), 243–347 (TQPE…APEF), 348–452 (YMTS…APAF), 453–562 (SRTS…APEI), and 570–682 (DGST…EPSA). Topologically, residues 29-692 (GQIRYSVREE…IPNDSDLTLY (664 aa)) are extracellular. 2 N-linked (GlcNAc...) asparagine glycosylation sites follow: Asn-419 and Asn-545. N-linked (GlcNAc...) asparagine glycosylation occurs at Asn-685. Residues 693–713 (LVVAVAAVSCVFLAFVIVLLA) traverse the membrane as a helical segment. Topologically, residues 714–932 (HRLRRWHKSR…KKKSGKKEKK (219 aa)) are cytoplasmic. Disordered stretches follow at residues 798–841 (LEEE…WPNN) and 902–932 (ATLT…KEKK). Positions 806–841 (FSQQAPPNTDWRFSQAQRPGTSGSQNGDDTGTWPNN) are enriched in polar residues. The span at 922-932 (NKKKSGKKEKK) shows a compositional bias: basic residues.

The protein localises to the cell membrane. In terms of biological role, potential calcium-dependent cell-adhesion protein. May be involved in the establishment and maintenance of specific neuronal connections in the brain. This chain is Protocadherin gamma-A2 (PCDHGA2), found in Homo sapiens (Human).